A 460-amino-acid chain; its full sequence is MKLTDSQKHLYSQYLAVTLIAVQFSFDTCVYLSSVVQYVKECGSDDPENYLFILQAVSAAVQVFFSFIIGDIASYVGSIKWVIIFLYFLSFVGNFLYSCAGAVSLNTLLGGRIICGAASSSGAVVYSYITAISKDRTTIFKLFSIYRTSAGICMALAQLVAILFALCDFTVRGYRITSYNAPTFASSFIILLICVLLMFVLENPPVKSARNPKNYLDAWKKFFSAGSNRLIASLILLWNMFLSTFFMCEVLYFMPIFLTLNVGWKTEYEGVAFMVSAVLGVAGSFFAPDLVKLFAKLNTPSTQDETDTSDNDKIEKEESEQKSDINTLHRNQVSLTIFALFVALIGQAFMIGASEALSNDKLPKTNSGIFFTAGLSITMLGYNFMGSSVPALFSMYIDPQVKVQLMPFIGAIAGVGKLVAPIVLAALYKTPLGLPIGVGFGMILVGISIPSLVYLRRNKM.

Helical transmembrane passes span 16-36 (AVTL…SSVV), 50-70 (YLFI…FIIG), 81-101 (WVII…SCAG), 113-133 (IICG…TAIS), 151-171 (GICM…DFTV), 181-201 (APTF…MFVL), 240-260 (MFLS…FLTL), and 271-291 (VAFM…PDLV). Residues 300 to 323 (PSTQDETDTSDNDKIEKEESEQKS) form a disordered region. Over residues 310-323 (DNDKIEKEESEQKS) the composition is skewed to basic and acidic residues. A run of 4 helical transmembrane segments spans residues 333–353 (VSLT…MIGA), 369–389 (IFFT…GSSV), 408–428 (FIGA…AALY), and 433–453 (GLPI…PSLV).

This sequence belongs to the major facilitator superfamily. TCR/Tet family.

It is found in the cell membrane. In terms of biological role, MFS-type transporer required for the uptake of iron via the uptake of the siderophore pulcherrimin-iron complex. This chain is MFS-type transporter PUL3, found in Kluyveromyces lactis (strain ATCC 8585 / CBS 2359 / DSM 70799 / NBRC 1267 / NRRL Y-1140 / WM37) (Yeast).